The primary structure comprises 246 residues: Ribonuclease PH (246 aa).

Phosphate-binding positions include Arg91 and 129–131 (GTR).

It belongs to the RNase PH family. Homohexameric ring arranged as a trimer of dimers.

It catalyses the reaction tRNA(n+1) + phosphate = tRNA(n) + a ribonucleoside 5'-diphosphate. Phosphorolytic 3'-5' exoribonuclease that plays an important role in tRNA 3'-end maturation. Removes nucleotide residues following the 3'-CCA terminus of tRNAs; can also add nucleotides to the ends of RNA molecules by using nucleoside diphosphates as substrates, but this may not be physiologically important. Probably plays a role in initiation of 16S rRNA degradation (leading to ribosome degradation) during starvation. The protein is Ribonuclease PH of Burkholderia ambifaria (strain ATCC BAA-244 / DSM 16087 / CCUG 44356 / LMG 19182 / AMMD) (Burkholderia cepacia (strain AMMD)).